Reading from the N-terminus, the 144-residue chain is Group IID secretory phospholipase A2 (144 aa).

A signal peptide spans 1–19; sequence MRLALLCGLLLAGITATQG. Cystine bridges form between Cys-45-Cys-137, Cys-47-Cys-63, Cys-62-Cys-117, Cys-68-Cys-144, Cys-69-Cys-110, Cys-78-Cys-103, and Cys-96-Cys-108. His-46, Gly-48, and Gly-50 together coordinate Ca(2+). Residue His-66 is part of the active site. Asp-67 serves as a coordination point for Ca(2+). A glycan (N-linked (GlcNAc...) asparagine) is linked at Asn-99. Asp-111 is an active-site residue.

Belongs to the phospholipase A2 family. Requires Ca(2+) as cofactor. Highly expressed in secondary lymphoid tissues, spleen and lymph nodes. Expressed at a lesser extent in thymus. Expressed in CD4-positive, IL2RA/CD25-positive, FOXP3-positive Tregs (at protein level). Expressed in myeloid cell subsets resident in spleen and lymph nodes, ITGAX/CD11C-positive dendritic cells and macrophages (at protein level). Enriched in CD4-positive, ITGAM/CD11B-positive dendritic cell subset. Expressed in pulmonary ITGAX/CD11C-positive dendritic cell subset (at protein level).

The protein resides in the secreted. Its subcellular location is the cell membrane. It localises to the cytoplasm. It carries out the reaction a 1,2-diacyl-sn-glycero-3-phosphoethanolamine + H2O = a 1-acyl-sn-glycero-3-phosphoethanolamine + a fatty acid + H(+). The catalysed reaction is 1-hexadecanoyl-2-(9Z-octadecenoyl)-sn-glycero-3-phosphoethanolamine + H2O = 1-hexadecanoyl-sn-glycero-3-phosphoethanolamine + (9Z)-octadecenoate + H(+). The enzyme catalyses 1-hexadecanoyl-2-(9Z,12Z-octadecadienoyl)-sn-glycero-3-phosphoethanolamine + H2O = 1-hexadecanoyl-sn-glycero-3-phosphoethanolamine + (9Z,12Z)-octadecadienoate + H(+). It catalyses the reaction 1,2-dihexadecanoyl-sn-glycero-3-phospho-(1'-sn-glycerol) + H2O = 1-hexadecanoyl-sn-glycero-3-phospho-(1'-sn-glycerol) + hexadecanoate + H(+). It carries out the reaction 1-hexadecanoyl-2-(9Z-octadecenoyl)-sn-glycero-3-phospho-(1'-sn-glycerol) + H2O = 1-hexadecanoyl-sn-glycero-3-phospho-(1'-sn-glycerol) + (9Z)-octadecenoate + H(+). The catalysed reaction is a 1,2-diacyl-sn-glycero-3-phosphocholine + H2O = a 1-acyl-sn-glycero-3-phosphocholine + a fatty acid + H(+). The enzyme catalyses 1,2-dihexadecanoyl-sn-glycero-3-phosphocholine + H2O = 1-hexadecanoyl-sn-glycero-3-phosphocholine + hexadecanoate + H(+). It catalyses the reaction 1-hexadecanoyl-2-(9Z-octadecenoyl)-sn-glycero-3-phosphocholine + H2O = 1-hexadecanoyl-sn-glycero-3-phosphocholine + (9Z)-octadecenoate + H(+). It carries out the reaction 1-hexadecanoyl-2-(9Z,12Z-octadecadienoyl)-sn-glycero-3-phosphocholine + H2O = (9Z,12Z)-octadecadienoate + 1-hexadecanoyl-sn-glycero-3-phosphocholine + H(+). The catalysed reaction is 1-hexadecanoyl-2-(4Z,7Z,10Z,13Z,16Z,19Z-docosahexaenoyl)-sn-glycero-3-phosphocholine + H2O = (4Z,7Z,10Z,13Z,16Z,19Z)-docosahexaenoate + 1-hexadecanoyl-sn-glycero-3-phosphocholine + H(+). Functionally, secretory calcium-dependent phospholipase A2 that primarily targets extracellular lipids, exerting anti-inflammatory and immunosuppressive functions. Hydrolyzes the ester bond of the fatty acyl group attached at sn-2 position of phospholipids (phospholipase A2 activity) with preference for phosphatidylethanolamines and phosphatidylglycerols over phosphatidylcholines. In draining lymph nodes, selectively hydrolyzes diacyl and alkenyl forms of phosphatidylethanolamines, releasing omega-3 polyunsaturated fatty acids (PUFAs) such as eicosapentaenoate and docosahexaenoate that are precursors of the anti-inflammatory lipid mediators, resolvins. During the resolution phase of acute inflammation drives docosahexaenoate-derived resolvin D1 synthesis, which suppresses dendritic cell activation and T-helper 1 immune response. May act in an autocrine and paracrine manner. Via a mechanism independent of its catalytic activity, promotes differentiation of regulatory T cells (Tregs) and participates in the maintenance of immune tolerance. May contribute to lipid remodeling of cellular membranes and generation of lipid mediators involved in pathogen clearance. Displays bactericidal activity against Gram-positive bacteria by directly hydrolyzing phospholipids of the bacterial membrane. This chain is Group IID secretory phospholipase A2 (Pla2g2d), found in Mus musculus (Mouse).